The primary structure comprises 398 residues: Elongation factor Tu (398 aa).

The tr-type G domain maps to Lys10 to Glu207. Residues Gly19–Thr26 are G1. Gly19 to Thr26 serves as a coordination point for GTP. Thr26 is a Mg(2+) binding site. The G2 stretch occupies residues Gly63 to Asn67. The segment at Asp84 to Gly87 is G3. GTP-binding positions include Asp84–His88 and Asn139–Asp142. The segment at Asn139 to Asp142 is G4. The tract at residues Ser177–Leu179 is G5.

This sequence belongs to the TRAFAC class translation factor GTPase superfamily. Classic translation factor GTPase family. EF-Tu/EF-1A subfamily. As to quaternary structure, monomer.

It is found in the cytoplasm. The catalysed reaction is GTP + H2O = GDP + phosphate + H(+). Functionally, GTP hydrolase that promotes the GTP-dependent binding of aminoacyl-tRNA to the A-site of ribosomes during protein biosynthesis. The polypeptide is Elongation factor Tu (Streptococcus equi subsp. zooepidemicus (strain MGCS10565)).